A 309-amino-acid chain; its full sequence is Cytochrome c biogenesis protein CcsA (309 aa).

A run of 8 helical transmembrane segments spans residues 18–38 (LGLL…GAVF), 43–63 (SFAV…QLLF), 73–93 (ISNL…GQLL), 102–122 (IIPS…CFVL), 148–168 (VMLS…VLFI), 216–236 (SILI…VWAN), 250–267 (TWAF…HMRI), and 279–299 (LAST…FLGI).

Belongs to the CcmF/CycK/Ccl1/NrfE/CcsA family. In terms of assembly, may interact with ccs1.

The protein resides in the cellular thylakoid membrane. Functionally, required during biogenesis of c-type cytochromes (cytochrome c6 and cytochrome f) at the step of heme attachment. In Prochlorococcus marinus (strain MIT 9301), this protein is Cytochrome c biogenesis protein CcsA.